A 410-amino-acid chain; its full sequence is MKCRTLYPLVPTFALAASLPLQALAEGFVDDAKASLTLRNFYMNRDYTGTASQGKAEEWTQSFIFDFKSGYTPGVVGFGVDVLGLYSIKLDGGKGTAGTQLLPVHDDGRPADDFGRTALAGKMRVSRTELKVGEWSPTLPILRADDGRSLPQTLQGAQVTSNELAGLSLYGGQFRQNSPRNDASMQDMSLFTRTAFTSDRFNFAGGEYRFNQERTLVGAWYAQLEDIYQQRYFQVQHQQPLGNWVLGANLGYFWGKDDGGAKAGELNNRTASGLFSAKLGGNTFYVGLQKVMGDDEWFRVNGASGGTLANDAFGSSYESARERSWQVRHDFNFVVLGIPGLTLMNRYIHGYNVHNASTQGRESELAYVVQSGPFKALNLKWRNSSQRRDWGSTNSFDENRLIVSYPLSLL.

Positions 1 to 25 (MKCRTLYPLVPTFALAASLPLQALA) are cleaved as a signal peptide.

This sequence belongs to the outer membrane porin (Opr) (TC 1.B.25) family.

Probable transporter, possibly involved in the gallate degradation pathway. May play a role in the uptake of low gallate concentrations that may exist in the natural habitats of P.putida. The chain is Porin-like protein GalP (galP) from Pseudomonas putida (strain ATCC 47054 / DSM 6125 / CFBP 8728 / NCIMB 11950 / KT2440).